The sequence spans 421 residues: NADH-quinone oxidoreductase subunit F 2 (421 aa).

An NAD(+)-binding site is contributed by 53 to 62; sequence GRGGAGFPTG. 165 to 212 lines the FMN pocket; it reads GAGAYICGEETAMLESLEGKRAQPRLKPPFPAVAGLYASPTVINNVET. Residues C342, C345, C348, and C388 each contribute to the [4Fe-4S] cluster site.

The protein belongs to the complex I 51 kDa subunit family. Requires FMN as cofactor. [4Fe-4S] cluster is required as a cofactor.

It catalyses the reaction a quinone + NADH + 5 H(+)(in) = a quinol + NAD(+) + 4 H(+)(out). Functionally, NDH-1 shuttles electrons from NADH, via FMN and iron-sulfur (Fe-S) centers, to quinones in the respiratory chain. The immediate electron acceptor for the enzyme in this species is believed to be ubiquinone. Couples the redox reaction to proton translocation (for every two electrons transferred, four hydrogen ions are translocated across the cytoplasmic membrane), and thus conserves the redox energy in a proton gradient. The polypeptide is NADH-quinone oxidoreductase subunit F 2 (nuoF2) (Rhizobium meliloti (strain 1021) (Ensifer meliloti)).